The sequence spans 153 residues: Histone H2B.8 (153 aa).

Composition is skewed to basic and acidic residues over residues 1-28 (MAPKAEKKPAAKKPAEEEPAAEKAEKAP) and 36-53 (EKRLPAGKGEKGSGEGKK). Positions 1-61 (MAPKAEKKPA…KKAGRKKAKK (61 aa)) are disordered. N6-acetyllysine is present on residues lysine 7 and lysine 37. Lysine 149 participates in a covalent cross-link: Glycyl lysine isopeptide (Lys-Gly) (interchain with G-Cter in ubiquitin).

Belongs to the histone H2B family. The nucleosome is a histone octamer containing two molecules each of H2A, H2B, H3 and H4 assembled in one H3-H4 heterotetramer and two H2A-H2B heterodimers. The octamer wraps approximately 147 bp of DNA. In terms of processing, can be acetylated to form H2BK6ac and H2BK33ac. Monoubiquitinated by BRE1 to form H2BK143ub1 and deubiquitinated by UBP26. Required for heterochromatic histone H3 di- and trimethylation at H3K4me. May give a specific tag for epigenetic transcriptional activation.

The protein resides in the nucleus. It is found in the chromosome. Core component of nucleosome. Nucleosomes wrap and compact DNA into chromatin, limiting DNA accessibility to the cellular machineries which require DNA as a template. Histones thereby play a central role in transcription regulation, DNA repair, DNA replication and chromosomal stability. DNA accessibility is regulated via a complex set of post-translational modifications of histones, also called histone code, and nucleosome remodeling. The sequence is that of Histone H2B.8 (H2B.8) from Oryza sativa subsp. indica (Rice).